Reading from the N-terminus, the 521-residue chain is Bifunctional purine biosynthesis protein PurH (521 aa).

Residues 1 to 145 form the MGS-like domain; sequence MIKQALISVS…KNHRDVTVVV (145 aa).

This sequence belongs to the PurH family.

It catalyses the reaction (6R)-10-formyltetrahydrofolate + 5-amino-1-(5-phospho-beta-D-ribosyl)imidazole-4-carboxamide = 5-formamido-1-(5-phospho-D-ribosyl)imidazole-4-carboxamide + (6S)-5,6,7,8-tetrahydrofolate. The enzyme catalyses IMP + H2O = 5-formamido-1-(5-phospho-D-ribosyl)imidazole-4-carboxamide. It participates in purine metabolism; IMP biosynthesis via de novo pathway; 5-formamido-1-(5-phospho-D-ribosyl)imidazole-4-carboxamide from 5-amino-1-(5-phospho-D-ribosyl)imidazole-4-carboxamide (10-formyl THF route): step 1/1. The protein operates within purine metabolism; IMP biosynthesis via de novo pathway; IMP from 5-formamido-1-(5-phospho-D-ribosyl)imidazole-4-carboxamide: step 1/1. This is Bifunctional purine biosynthesis protein PurH from Burkholderia pseudomallei (strain 1106a).